The following is a 280-amino-acid chain: Thiamine-phosphate synthase (280 aa).

The segment at Met1–Thr64 is disordered. Basic and acidic residues predominate over residues Gly42–Ala55. Residues Gln104–Lys108 and Asn141 each bind 4-amino-2-methyl-5-(diphosphooxymethyl)pyrimidine. The Mg(2+) site is built by Asp142 and Asp161. Ser179 contributes to the 4-amino-2-methyl-5-(diphosphooxymethyl)pyrimidine binding site. Thr205–Thr207 contributes to the 2-[(2R,5Z)-2-carboxy-4-methylthiazol-5(2H)-ylidene]ethyl phosphate binding site. Lys208 lines the 4-amino-2-methyl-5-(diphosphooxymethyl)pyrimidine pocket. Gly236 serves as a coordination point for 2-[(2R,5Z)-2-carboxy-4-methylthiazol-5(2H)-ylidene]ethyl phosphate.

This sequence belongs to the thiamine-phosphate synthase family. The cofactor is Mg(2+).

The enzyme catalyses 2-[(2R,5Z)-2-carboxy-4-methylthiazol-5(2H)-ylidene]ethyl phosphate + 4-amino-2-methyl-5-(diphosphooxymethyl)pyrimidine + 2 H(+) = thiamine phosphate + CO2 + diphosphate. It carries out the reaction 2-(2-carboxy-4-methylthiazol-5-yl)ethyl phosphate + 4-amino-2-methyl-5-(diphosphooxymethyl)pyrimidine + 2 H(+) = thiamine phosphate + CO2 + diphosphate. The catalysed reaction is 4-methyl-5-(2-phosphooxyethyl)-thiazole + 4-amino-2-methyl-5-(diphosphooxymethyl)pyrimidine + H(+) = thiamine phosphate + diphosphate. It functions in the pathway cofactor biosynthesis; thiamine diphosphate biosynthesis; thiamine phosphate from 4-amino-2-methyl-5-diphosphomethylpyrimidine and 4-methyl-5-(2-phosphoethyl)-thiazole: step 1/1. In terms of biological role, condenses 4-methyl-5-(beta-hydroxyethyl)thiazole monophosphate (THZ-P) and 2-methyl-4-amino-5-hydroxymethyl pyrimidine pyrophosphate (HMP-PP) to form thiamine monophosphate (TMP). This Deinococcus radiodurans (strain ATCC 13939 / DSM 20539 / JCM 16871 / CCUG 27074 / LMG 4051 / NBRC 15346 / NCIMB 9279 / VKM B-1422 / R1) protein is Thiamine-phosphate synthase.